We begin with the raw amino-acid sequence, 216 residues long: Corrinoid protein DSY3155 (216 aa).

The B12-binding N-terminal domain maps to 1–90 (MIMSLLDELK…EIAKKGMSEG (90 aa)). Residues 93 to 216 (KGKIVLGTVE…VELANKILGK (124 aa)) enclose the B12-binding domain. A methylcob(III)alamin-binding site is contributed by H106.

Belongs to the methylamine corrinoid protein family.

Its function is as follows. Probably harbors a corrinoid prosthetic group and acts as a methyl group carrier between MtgB and MtgA. A methyl group from glycine betaine is likely first transferred to the corrinoid prosthetic group of the enzyme by MtgB, and then transferred to tetrahydrofolate (THF) by MtgA. The methyl group may then be ultimately converted to carbon dioxide, and its oxidation would also provide reducing equivalents for anaerobic respiration. Thus, may function in the pathway that allows anaerobic methylotrophic growth of D.hafniense using glycine betaine. The polypeptide is Corrinoid protein DSY3155 (Desulfitobacterium hafniense (strain Y51)).